The sequence spans 445 residues: UPF0210 protein SPP_0289 (445 aa).

Belongs to the UPF0210 family. In terms of assembly, homodimer.

This is UPF0210 protein SPP_0289 from Streptococcus pneumoniae (strain P1031).